The sequence spans 251 residues: DNA repair protein RecO (251 aa).

This sequence belongs to the RecO family.

In terms of biological role, involved in DNA repair and RecF pathway recombination. The chain is DNA repair protein RecO from Macrococcus caseolyticus (strain JCSC5402) (Macrococcoides caseolyticum).